A 305-amino-acid polypeptide reads, in one-letter code: NAD kinase (305 aa).

D76 serves as the catalytic Proton acceptor. Residues 76–77 (DG), 150–151 (ND), R161, and D180 each bind NAD(+).

This sequence belongs to the NAD kinase family. It depends on a divalent metal cation as a cofactor.

It is found in the cytoplasm. The enzyme catalyses NAD(+) + ATP = ADP + NADP(+) + H(+). Functionally, involved in the regulation of the intracellular balance of NAD and NADP, and is a key enzyme in the biosynthesis of NADP. Catalyzes specifically the phosphorylation on 2'-hydroxyl of the adenosine moiety of NAD to yield NADP. The polypeptide is NAD kinase (Treponema pallidum (strain Nichols)).